The chain runs to 388 residues: Succinate--CoA ligase [ADP-forming] subunit beta (388 aa).

An ATP-grasp domain is found at 9-244 (KEIFRSMGVA…LEEEDPKEIE (236 aa)). Residues Lys-46, 53 to 55 (GRG), Glu-99, Cys-102, and Glu-107 contribute to the ATP site. Asn-199 and Asp-213 together coordinate Mg(2+). Residues Asn-264 and 321-323 (GIM) each bind substrate.

It belongs to the succinate/malate CoA ligase beta subunit family. Heterotetramer of two alpha and two beta subunits. Requires Mg(2+) as cofactor.

It catalyses the reaction succinate + ATP + CoA = succinyl-CoA + ADP + phosphate. It carries out the reaction GTP + succinate + CoA = succinyl-CoA + GDP + phosphate. The protein operates within carbohydrate metabolism; tricarboxylic acid cycle; succinate from succinyl-CoA (ligase route): step 1/1. Functionally, succinyl-CoA synthetase functions in the citric acid cycle (TCA), coupling the hydrolysis of succinyl-CoA to the synthesis of either ATP or GTP and thus represents the only step of substrate-level phosphorylation in the TCA. The beta subunit provides nucleotide specificity of the enzyme and binds the substrate succinate, while the binding sites for coenzyme A and phosphate are found in the alpha subunit. In Staphylococcus haemolyticus (strain JCSC1435), this protein is Succinate--CoA ligase [ADP-forming] subunit beta.